Reading from the N-terminus, the 329-residue chain is Endonuclease 8-like 2 (329 aa).

The Schiff-base intermediate with DNA role is filled by P2. The active-site Proton donor is the E3. The active-site Proton donor; for beta-elimination activity is K50. Residue K50 is modified to N6-acetyllysine. Phosphoserine is present on S68. Residues 68 to 116 (SLLSEPLREGEQKDKARHHQEASDPSSWSPGGDSAVPSGDDGLQCLGGD) are disordered. Basic and acidic residues predominate over residues 73–89 (PLREGEQKDKARHHQEA). The span at 90–102 (SDPSSWSPGGDSA) shows a compositional bias: low complexity. N6-acetyllysine is present on K149. N227 is a binding site for DNA. The FPG-type zinc-finger motif lies at 280-316 (QIYQKEQCPAGHQVVRESLGPPGGFQRLTWWCPQCQP). The active-site Proton donor; for delta-elimination activity is R306.

This sequence belongs to the FPG family. In terms of assembly, binds EP300.

It localises to the nucleus. The enzyme catalyses 2'-deoxyribonucleotide-(2'-deoxyribose 5'-phosphate)-2'-deoxyribonucleotide-DNA = a 3'-end 2'-deoxyribonucleotide-(2,3-dehydro-2,3-deoxyribose 5'-phosphate)-DNA + a 5'-end 5'-phospho-2'-deoxyribonucleoside-DNA + H(+). With respect to regulation, acetylation of Lys-50 leads to loss of DNA nicking activity. In terms of biological role, involved in base excision repair of DNA damaged by oxidation or by mutagenic agents. Has DNA glycosylase activity towards 5-hydroxyuracil and other oxidized derivatives of cytosine with a preference for mismatched double-stranded DNA (DNA bubbles). Has low or no DNA glycosylase activity towards thymine glycol, 2-hydroxyadenine, hypoxanthine and 8-oxoguanine. Has AP (apurinic/apyrimidinic) lyase activity and introduces nicks in the DNA strand. Cleaves the DNA backbone by beta-delta elimination to generate a single-strand break at the site of the removed base with both 3'- and 5'-phosphates. This Bos taurus (Bovine) protein is Endonuclease 8-like 2 (NEIL2).